A 251-amino-acid polypeptide reads, in one-letter code: Coproheme decarboxylase (251 aa).

Residues R133, 147 to 151, H174, Q187, and S225 each bind Fe-coproporphyrin III; that span reads YPMSK. The active site involves Y147.

The protein belongs to the ChdC family. Type 1 subfamily. The cofactor is Fe-coproporphyrin III.

The enzyme catalyses Fe-coproporphyrin III + 2 H2O2 + 2 H(+) = heme b + 2 CO2 + 4 H2O. It catalyses the reaction Fe-coproporphyrin III + H2O2 + H(+) = harderoheme III + CO2 + 2 H2O. It carries out the reaction harderoheme III + H2O2 + H(+) = heme b + CO2 + 2 H2O. Its pathway is porphyrin-containing compound metabolism; protoheme biosynthesis. Its function is as follows. Involved in coproporphyrin-dependent heme b biosynthesis. Catalyzes the decarboxylation of Fe-coproporphyrin III (coproheme) to heme b (protoheme IX), the last step of the pathway. The reaction occurs in a stepwise manner with a three-propionate intermediate. The polypeptide is Coproheme decarboxylase (Listeria innocua serovar 6a (strain ATCC BAA-680 / CLIP 11262)).